Reading from the N-terminus, the 177-residue chain is MSRIGKKPVQVPAGITASVDGQKVTAKGPKGELFFVANDEIGLKLEDNAIVVTPLSNSKDARSKWGMSRTMIENILKGVKEGYERKLEINGVGYRAALQGKNLQLALGFSHDVVYEPPEGITIAVPKPTEIVVSGINKQQVGQVAAEIREYRGPEPYKGKGVKYAGERIVRKEGKKK.

It belongs to the universal ribosomal protein uL6 family. Part of the 50S ribosomal subunit.

Functionally, this protein binds to the 23S rRNA, and is important in its secondary structure. It is located near the subunit interface in the base of the L7/L12 stalk, and near the tRNA binding site of the peptidyltransferase center. The chain is Large ribosomal subunit protein uL6 from Rhizobium rhizogenes (strain K84 / ATCC BAA-868) (Agrobacterium radiobacter).